The primary structure comprises 1503 residues: Lysophospholipase NTE1 (1503 aa).

Residues 1-25 lie on the Cytoplasmic side of the membrane; the sequence is MDSSTAALATASAKLDAVAQQGSSS. A helical membrane pass occupies residues 26–46; sequence WIGFFANIILGIISLVYSILY. At 47-71 the chain is on the lumenal side; sequence SVLKLTTFSIPSLLYTLFSTSLTVT. Residues 72-92 form a helical membrane-spanning segment; that stretch reads MNATTLMLIIVLVFSLVSWFV. Residues 93–1503 lie on the Cytoplasmic side of the membrane; it reads RYRYLNMYSR…RTMAPRRASI (1411 aa). Disordered regions lie at residues 252-348, 454-561, and 722-745; these read RHGG…TTSV, TKGI…SNPF, and KNES…RFMD. Composition is skewed to polar residues over residues 262-272, 285-302, 487-496, 506-542, 552-561, and 723-737; these read TSATETYTSSR, STVS…SSHG, QRPSSVTASP, KHTS…STLL, PLSQRTSNPF, and NESS…QQGS. A nucleoside 3',5'-cyclic phosphate is bound by residues 658-777 and 821-941; these read GLPV…GYVG and RLTN…IASR. The PNPLA domain maps to 1200–1364; that stretch reads LVLGGGGARG…IDNLTVSHMK (165 aa). The GXGXXG motif lies at 1204-1209; the sequence is GGGARG. The GXSXG motif lies at 1231–1235; it reads GTSIG. Ser-1233 functions as the Nucleophile in the catalytic mechanism. Catalysis depends on Asp-1351, which acts as the Proton acceptor. A DGA/G motif is present at residues 1351–1353; the sequence is DGG.

The protein belongs to the NTE family.

The protein localises to the endoplasmic reticulum membrane. The catalysed reaction is a 1-acyl-sn-glycero-3-phosphocholine + H2O = sn-glycerol 3-phosphocholine + a fatty acid + H(+). With respect to regulation, inhibited by organophosphorus esters. Intracellular phospholipase B that catalyzes the double deacylation of phosphatidylcholine (PC) to glycerophosphocholine (GroPCho). Plays an important role in membrane lipid homeostasis. Responsible for the rapid PC turnover in response to inositol, elevated temperatures, or when choline is present in the growth medium. The chain is Lysophospholipase NTE1 (NTE1) from Pyricularia oryzae (strain 70-15 / ATCC MYA-4617 / FGSC 8958) (Rice blast fungus).